The primary structure comprises 232 residues: Ubiquinone biosynthesis O-methyltransferase (232 aa).

4 residues coordinate S-adenosyl-L-methionine: arginine 36, glycine 55, aspartate 76, and leucine 120.

It belongs to the methyltransferase superfamily. UbiG/COQ3 family.

It catalyses the reaction a 3-demethylubiquinol + S-adenosyl-L-methionine = a ubiquinol + S-adenosyl-L-homocysteine + H(+). The enzyme catalyses a 3-(all-trans-polyprenyl)benzene-1,2-diol + S-adenosyl-L-methionine = a 2-methoxy-6-(all-trans-polyprenyl)phenol + S-adenosyl-L-homocysteine + H(+). It functions in the pathway cofactor biosynthesis; ubiquinone biosynthesis. In terms of biological role, O-methyltransferase that catalyzes the 2 O-methylation steps in the ubiquinone biosynthetic pathway. This is Ubiquinone biosynthesis O-methyltransferase from Pseudomonas fluorescens (strain SBW25).